We begin with the raw amino-acid sequence, 147 residues long: Ubiquitin-conjugating enzyme E2 5A (147 aa).

Over residues 1 to 15 (MASKRIQKELKDLQK) the composition is skewed to basic and acidic residues. The segment at 1–24 (MASKRIQKELKDLQKDPPTSCSAG) is disordered. The UBC core domain occupies 1–147 (MASKRIQKEL…ARTWTQRYAM (147 aa)). C85 (glycyl thioester intermediate) is an active-site residue.

The protein belongs to the ubiquitin-conjugating enzyme family.

It carries out the reaction S-ubiquitinyl-[E1 ubiquitin-activating enzyme]-L-cysteine + [E2 ubiquitin-conjugating enzyme]-L-cysteine = [E1 ubiquitin-activating enzyme]-L-cysteine + S-ubiquitinyl-[E2 ubiquitin-conjugating enzyme]-L-cysteine.. It functions in the pathway protein modification; protein ubiquitination. E2 conjugating enzyme that associates with the E3 ubiquitin-protein ligase EL5 to mediate ubiquitination of target proteins. The protein is Ubiquitin-conjugating enzyme E2 5A (UBC5A) of Oryza sativa subsp. japonica (Rice).